We begin with the raw amino-acid sequence, 1706 residues long: Serine/threonine-protein kinase vps15 (1706 aa).

The Protein kinase domain occupies 24–293 (YHNERSLGDS…YLQKYRGTVF (270 aa)). Residues 30–38 (LGDSHFLRT) and Lys52 contribute to the ATP site. An HEAT 1 repeat occupies 56 to 94 (NKLPEISLSSIVNLLKEEQENISYRVPNAVPYIKTLVTL). The active-site Proton acceptor is Asp146. HEAT repeat units follow at residues 426–465 (LYGAAVLLPIVLSTIRHVNTRESKINALSLVQILSRNICD), 466–504 (ESKLDTVLPFVMTLLRDQYADVRISALITITRLVSNVTS), 511–549 (FLFQEYLFPDLQHFLFDMNSRTRATYASCLPILAKQASK), 587–625 (HDLVVTVERHVSTLLADSSSIVRRSLLNALAPLCVFFGK), 626–664 (AKSNDLILSHLITYLNDTDWMLRCAFFESITGLSIFIGP), 665–703 (RSVDEYILPLMLQALVDPEPAVLESVLGSFSGLIELHLF), and 705–743 (KLVVVDILQLVLPLVAVPNAYIRRAALSVIYSAYQSFDD). At Ser957 the chain carries Phosphoserine. Tyr958 carries the post-translational modification Phosphotyrosine. The tract at residues 982–1099 (TTKPKDVSQS…GKSLAPLISS (118 aa)) is disordered. Composition is skewed to basic and acidic residues over residues 984–1002 (KPKDVSQSDIKVDINRESN) and 1014–1023 (DVYRQTDNPE). The span at 1029–1055 (DTASSKVDTHNPTVTQPTDDTGGLNSY) shows a compositional bias: polar residues. Low complexity predominate over residues 1056–1069 (NTENPLLTNNTLEP). The segment covering 1079-1090 (KDSDKHAKESKG) has biased composition (basic and acidic residues). WD repeat units follow at residues 1213 to 1252 (LLDGGTKKVLVSPDSSFFVTLGSDGVVRAWQLVESVRHIS) and 1368 to 1407 (LQCGSATSVVVSEGCNWALIGTTKGWLLLWDLRFGTLSCS). Residues 1431 to 1442 (NEYTSGNNNSPV) are compositionally biased toward polar residues. The tract at residues 1431–1461 (NEYTSGNNNSPVTKVPGSSSTSSSSTQPINS) is disordered. A WD 3 repeat occupies 1577–1622 (CISSPIYRYRGPSAGSVEREPLFLIAASGSPHAFIWNPHNVSASSS).

It belongs to the protein kinase superfamily. Ser/Thr protein kinase family. As to quaternary structure, component of the autophagy-specific vps34 PI3-kinase complex I composed of vps15, atg6, pik3/vps34, atg14 and atg38. Also a component of the vps34 PI3-kinase complex II composed of atg6, pik3, vps15 and vps38.

It catalyses the reaction L-seryl-[protein] + ATP = O-phospho-L-seryl-[protein] + ADP + H(+). The enzyme catalyses L-threonyl-[protein] + ATP = O-phospho-L-threonyl-[protein] + ADP + H(+). Its function is as follows. Functions as a part of the autophagy-specific VPS34 PI3-kinase complex I that plays a role in autophagosome assembly. This complex is essential to recruit the atg8-phosphatidylinositol conjugate and the atg12-atg5 conjugate to the pre-autophagosomal structure. Also functions as part of the VPS34 PI3-kinase complex II. The polypeptide is Serine/threonine-protein kinase vps15 (Schizosaccharomyces pombe (strain 972 / ATCC 24843) (Fission yeast)).